The primary structure comprises 153 residues: ATP synthase subunit b' (153 aa).

The helical transmembrane segment at 23 to 40 (LMAIQVVALTYILNSLFF) threads the bilayer.

This sequence belongs to the ATPase B chain family. As to quaternary structure, F-type ATPases have 2 components, F(1) - the catalytic core - and F(0) - the membrane proton channel. F(1) has five subunits: alpha(3), beta(3), gamma(1), delta(1), epsilon(1). F(0) has four main subunits: a(1), b(1), b'(1) and c(10-14). The alpha and beta chains form an alternating ring which encloses part of the gamma chain. F(1) is attached to F(0) by a central stalk formed by the gamma and epsilon chains, while a peripheral stalk is formed by the delta, b and b' chains.

It is found in the cellular thylakoid membrane. Its function is as follows. F(1)F(0) ATP synthase produces ATP from ADP in the presence of a proton or sodium gradient. F-type ATPases consist of two structural domains, F(1) containing the extramembraneous catalytic core and F(0) containing the membrane proton channel, linked together by a central stalk and a peripheral stalk. During catalysis, ATP synthesis in the catalytic domain of F(1) is coupled via a rotary mechanism of the central stalk subunits to proton translocation. Functionally, component of the F(0) channel, it forms part of the peripheral stalk, linking F(1) to F(0). The b'-subunit is a diverged and duplicated form of b found in plants and photosynthetic bacteria. The chain is ATP synthase subunit b' from Prochlorococcus marinus (strain MIT 9515).